The primary structure comprises 324 residues: Succinylglutamate desuccinylase (324 aa).

Residues histidine 53, glutamate 56, and histidine 148 each contribute to the Zn(2+) site. Residue glutamate 211 is part of the active site.

It belongs to the AspA/AstE family. Succinylglutamate desuccinylase subfamily. Zn(2+) is required as a cofactor.

It catalyses the reaction N-succinyl-L-glutamate + H2O = L-glutamate + succinate. It functions in the pathway amino-acid degradation; L-arginine degradation via AST pathway; L-glutamate and succinate from L-arginine: step 5/5. In terms of biological role, transforms N(2)-succinylglutamate into succinate and glutamate. In Acinetobacter baumannii (strain AB0057), this protein is Succinylglutamate desuccinylase.